We begin with the raw amino-acid sequence, 490 residues long: Alpha-galactosidase (490 aa).

Phe-4–Asp-70 serves as a coordination point for NAD(+). Asn-150 is a binding site for substrate. Cys-171 serves as a coordination point for Mn(2+). The active-site Proton donor is His-172. His-201 is a binding site for Mn(2+). Tyr-258 (proton acceptor) is an active-site residue.

This sequence belongs to the glycosyl hydrolase 4 family. Homodimer. It depends on Mn(2+) as a cofactor. NAD(+) serves as cofactor.

It catalyses the reaction Hydrolysis of terminal, non-reducing alpha-D-galactose residues in alpha-D-galactosides, including galactose oligosaccharides, galactomannans and galactolipids.. The protein is Alpha-galactosidase (melA) of Rhizobium meliloti (strain 1021) (Ensifer meliloti).